We begin with the raw amino-acid sequence, 492 residues long: Aspartate aminotransferase (492 aa).

The transit peptide at 1-66 directs the protein to the chloroplast; sequence MMSASFKCPV…KGSCCLFNIR (66 aa). The L-aspartate site is built by Gly119, Trp206, and Asn256. Lys319 carries the N6-(pyridoxal phosphate)lysine modification. Arg458 contacts L-aspartate.

It belongs to the class-I pyridoxal-phosphate-dependent aminotransferase family. As to quaternary structure, homodimer. Requires pyridoxal 5'-phosphate as cofactor.

It is found in the plastid. The protein resides in the chloroplast. The catalysed reaction is L-aspartate + 2-oxoglutarate = oxaloacetate + L-glutamate. In terms of biological role, prokaryotic-type aspartate aminotransferase. Specific for aspartate and no activity with glutamine, asparagine, alanine, histidine, leucine, methionine, lysine, arginine, tryptophan, tyrosine, phenylalanine or kynurenine. The protein is Aspartate aminotransferase (AAT) of Pinus pinaster (Maritime pine).